Here is a 269-residue protein sequence, read N- to C-terminus: 4-hydroxy-tetrahydrodipicolinate reductase (269 aa).

NAD(+) is bound by residues 10–15, E36, 99–101, and 123–126; these read GANGRM, GTT, and AANF. H156 acts as the Proton donor/acceptor in catalysis. H157 contributes to the (S)-2,3,4,5-tetrahydrodipicolinate binding site. The active-site Proton donor is K160. A (S)-2,3,4,5-tetrahydrodipicolinate-binding site is contributed by 166–167; it reads GT.

The protein belongs to the DapB family.

The protein resides in the cytoplasm. It catalyses the reaction (S)-2,3,4,5-tetrahydrodipicolinate + NAD(+) + H2O = (2S,4S)-4-hydroxy-2,3,4,5-tetrahydrodipicolinate + NADH + H(+). The catalysed reaction is (S)-2,3,4,5-tetrahydrodipicolinate + NADP(+) + H2O = (2S,4S)-4-hydroxy-2,3,4,5-tetrahydrodipicolinate + NADPH + H(+). Its pathway is amino-acid biosynthesis; L-lysine biosynthesis via DAP pathway; (S)-tetrahydrodipicolinate from L-aspartate: step 4/4. Catalyzes the conversion of 4-hydroxy-tetrahydrodipicolinate (HTPA) to tetrahydrodipicolinate. This Neisseria gonorrhoeae (strain ATCC 700825 / FA 1090) protein is 4-hydroxy-tetrahydrodipicolinate reductase.